We begin with the raw amino-acid sequence, 515 residues long: 2,3-bisphosphoglycerate-independent phosphoglycerate mutase (515 aa).

Positions 14 and 64 each coordinate Mn(2+). S64 functions as the Phosphoserine intermediate in the catalytic mechanism. Residues H125, R155 to D156, R187, R193, R263 to R266, and K337 each bind substrate. 5 residues coordinate Mn(2+): D404, H408, D445, H446, and H464.

Belongs to the BPG-independent phosphoglycerate mutase family. As to quaternary structure, monomer. Requires Mn(2+) as cofactor.

It catalyses the reaction (2R)-2-phosphoglycerate = (2R)-3-phosphoglycerate. Its pathway is carbohydrate degradation; glycolysis; pyruvate from D-glyceraldehyde 3-phosphate: step 3/5. Its function is as follows. Catalyzes the interconversion of 2-phosphoglycerate and 3-phosphoglycerate. The chain is 2,3-bisphosphoglycerate-independent phosphoglycerate mutase from Pseudomonas paraeruginosa (strain DSM 24068 / PA7) (Pseudomonas aeruginosa (strain PA7)).